The primary structure comprises 813 residues: Lon protease (813 aa).

The Lon N-terminal domain maps to 30–225 (LPILPVRNIV…WLLQLMDKDI (196 aa)). 376–383 (GPPGVGKT) provides a ligand contact to ATP. Residues 612–793 (DDLAGIVTGL…DEVLAIALLK (182 aa)) form the Lon proteolytic domain. Active-site residues include S699 and K742.

It belongs to the peptidase S16 family. Homohexamer. Organized in a ring with a central cavity.

The protein resides in the cytoplasm. It carries out the reaction Hydrolysis of proteins in presence of ATP.. Its function is as follows. ATP-dependent serine protease that mediates the selective degradation of mutant and abnormal proteins as well as certain short-lived regulatory proteins. Required for cellular homeostasis and for survival from DNA damage and developmental changes induced by stress. Degrades polypeptides processively to yield small peptide fragments that are 5 to 10 amino acids long. Binds to DNA in a double-stranded, site-specific manner. In Cytophaga hutchinsonii (strain ATCC 33406 / DSM 1761 / CIP 103989 / NBRC 15051 / NCIMB 9469 / D465), this protein is Lon protease.